Consider the following 226-residue polypeptide: ATP-dependent dethiobiotin synthetase BioD (226 aa).

14–19 (GIGKTF) contributes to the ATP binding site. A Mg(2+)-binding site is contributed by T18. The active site involves K39. Substrate is bound at residue S43. ATP-binding positions include D56, 117 to 120 (EGVG), 177 to 178 (NT), 206 to 208 (PHI), and N213. Mg(2+) is bound by residues D56 and E117.

Belongs to the dethiobiotin synthetase family. Homodimer. The cofactor is Mg(2+).

It localises to the cytoplasm. It catalyses the reaction (7R,8S)-7,8-diammoniononanoate + CO2 + ATP = (4R,5S)-dethiobiotin + ADP + phosphate + 3 H(+). It participates in cofactor biosynthesis; biotin biosynthesis; biotin from 7,8-diaminononanoate: step 1/2. Catalyzes a mechanistically unusual reaction, the ATP-dependent insertion of CO2 between the N7 and N8 nitrogen atoms of 7,8-diaminopelargonic acid (DAPA, also called 7,8-diammoniononanoate) to form a ureido ring. In Xylella fastidiosa (strain M12), this protein is ATP-dependent dethiobiotin synthetase BioD.